A 465-amino-acid chain; its full sequence is ATP synthase subunit beta (465 aa).

155–162 (GGAGVGKT) is an ATP binding site.

This sequence belongs to the ATPase alpha/beta chains family. F-type ATPases have 2 components, CF(1) - the catalytic core - and CF(0) - the membrane proton channel. CF(1) has five subunits: alpha(3), beta(3), gamma(1), delta(1), epsilon(1). CF(0) has three main subunits: a(1), b(2) and c(9-12). The alpha and beta chains form an alternating ring which encloses part of the gamma chain. CF(1) is attached to CF(0) by a central stalk formed by the gamma and epsilon chains, while a peripheral stalk is formed by the delta and b chains.

The protein localises to the cell membrane. The catalysed reaction is ATP + H2O + 4 H(+)(in) = ADP + phosphate + 5 H(+)(out). Produces ATP from ADP in the presence of a proton gradient across the membrane. The catalytic sites are hosted primarily by the beta subunits. The sequence is that of ATP synthase subunit beta from Buchnera aphidicola subsp. Baizongia pistaciae (strain Bp).